The following is a 186-amino-acid chain: Dirigent protein 7 (186 aa).

A signal peptide spans 1-21 (MAKLILIIVTQILLIAAVVSA). N-linked (GlcNAc...) asparagine glycans are attached at residues N70, N91, and N126.

It belongs to the plant dirigent protein family. In terms of assembly, homodimer.

The protein resides in the secreted. The protein localises to the extracellular space. It is found in the apoplast. Functionally, dirigent proteins impart stereoselectivity on the phenoxy radical-coupling reaction, yielding optically active lignans from two molecules of coniferyl alcohol in the biosynthesis of lignans, flavonolignans, and alkaloids and thus plays a central role in plant secondary metabolism. The polypeptide is Dirigent protein 7 (DIR7) (Arabidopsis thaliana (Mouse-ear cress)).